Reading from the N-terminus, the 998-residue chain is RNA-directed RNA polymerase (998 aa).

2 interaction with host mitochondria outer membrane regions span residues 1-67 (MTLK…DKTK) and 233-250 (VRTS…RMIG). The interval 1-400 (MTLKVILGEH…KPTMPRVHWP (400 aa)) is homomultimerization. The chain crosses the membrane as a helical span at residues 17 to 34 (LLVGIATVSGCGAVVYCI). A cytoplasmic region spans residues 35–998 (SKFWGYGAIA…AQPQPSNNRK (964 aa)). Residues 91-282 (NGHAVSGAVR…LVYTIPQYVI (192 aa)) are capping. Asp692 serves as the catalytic For RdRp/TNTase activity. The segment at 700–800 (IQKSINRAAK…MVLRLYGPTA (101 aa)) is homomultimerization. The segment at 901–998 (AKQTRANPGT…AQPQPSNNRK (98 aa)) is disordered. Composition is skewed to polar residues over residues 904 to 913 (TRANPGTSRP) and 947 to 961 (GKTN…TAGE). The span at 971 to 984 (KGPRGGKTNTRRTP) shows a compositional bias: basic residues.

This sequence belongs to the nodaviridae RNA polymerase family. In terms of assembly, homododecamer. Forms 2 stacked rings of 35-nm in diameter, arranged in a crown-like structure at the opening of virus-induced replication vesicles. Interacts with protein B2. Mn(2+) serves as cofactor.

It is found in the host mitochondrion outer membrane. It carries out the reaction RNA(n) + a ribonucleoside 5'-triphosphate = RNA(n+1) + diphosphate. Drastically inhibited by phosphonoacetic acid. Only slightly inhibited by gliotoxin. Functionally, RNA-dependent RNA polymerase, which replicates the viral genome composed of 2 RNA segments, RNA1 and RNA2. Does not need an exogenous primer. Also possesses a terminal nucleotidyl transferase (TNTase) activity. The TNTase catalyzes the addition of nucleotide to the 3'-end of plus- and minus-stranded RNAs, probably to repair the 3'-end nucleotide loss. Forms the open necked connection to the cytosol of the virus-induced replication vesicles. Mediates viral RNA1 recruitment. This Costelytra zealandica (Greater wax moth) protein is RNA-directed RNA polymerase.